A 479-amino-acid chain; its full sequence is Anaerobic nitric oxide reductase flavorubredoxin (479 aa).

The segment at 30–210 (LRGSSYNSYL…PFSRLVTPKI (181 aa)) is zinc metallo-hydrolase. Fe cation-binding residues include His79, Glu81, Asp83, His147, Asp166, and His227. The Flavodoxin-like domain occupies 254–393 (ITIFYDTMSN…LCRQHGRDIA (140 aa)). FMN contacts are provided by residues 260–264 (TMSNN) and 342–369 (AFGS…EMSL). The 52-residue stretch at 423 to 474 (GPKMQCSVCQWIYDPALGEPLQDVAPGTPWSDVPDNFLCPECSLGKDVFDVL) folds into the Rubredoxin-like domain. Residues Cys428, Cys431, Cys461, and Cys464 each contribute to the Fe cation site.

The protein in the N-terminal section; belongs to the zinc metallo-hydrolase group 3 family. As to quaternary structure, homotetramer. It depends on Fe cation as a cofactor. FMN serves as cofactor.

The protein resides in the cytoplasm. The protein operates within nitrogen metabolism; nitric oxide reduction. Functionally, anaerobic nitric oxide reductase; uses NADH to detoxify nitric oxide (NO), protecting several 4Fe-4S NO-sensitive enzymes. Has at least 2 reductase partners, only one of which (NorW, flavorubredoxin reductase) has been identified. NO probably binds to the di-iron center; electrons enter from the NorW at rubredoxin and are transferred sequentially to the FMN center and the di-iron center. Also able to function as an aerobic oxygen reductase. This is Anaerobic nitric oxide reductase flavorubredoxin from Salmonella arizonae (strain ATCC BAA-731 / CDC346-86 / RSK2980).